The chain runs to 106 residues: UPF0145 protein CLL_A2504 (106 aa).

It belongs to the UPF0145 family.

This is UPF0145 protein CLL_A2504 from Clostridium botulinum (strain Eklund 17B / Type B).